Here is a 655-residue protein sequence, read N- to C-terminus: Alpha-amylase (655 aa).

The Nucleophile role is filled by E123. The Proton donor role is filled by D214.

The protein belongs to the glycosyl hydrolase 57 family.

The catalysed reaction is Endohydrolysis of (1-&gt;4)-alpha-D-glucosidic linkages in polysaccharides containing three or more (1-&gt;4)-alpha-linked D-glucose units.. This chain is Alpha-amylase (amyA), found in Pyrococcus abyssi (strain GE5 / Orsay).